The primary structure comprises 474 residues: Cyclin-dependent kinase 2 homolog (474 aa).

The 440-residue stretch at 7-446 folds into the Protein kinase domain; the sequence is YRHVVKLGEG…AAEAVHHPYL (440 aa). Residues 13 to 21 and Lys-36 contribute to the ATP site; that span reads LGEGTYGMV. At Thr-17 the chain carries Phosphothreonine. Residue Tyr-18 is modified to Phosphotyrosine. Asp-131 acts as the Proton acceptor in catalysis. Residues 150–200 are disordered; sequence TALPSSPQQSMRVPHAGGTNGEAGRASANGNEHAPRPTAAEGSVSPWEEAA. Position 230 is a phosphoserine (Ser-230). The span at 334–354 shows a compositional bias: low complexity; it reads QQLQAQQQQPQQGSSPSHSSS. The tract at residues 334–356 is disordered; that stretch reads QQLQAQQQQPQQGSSPSHSSSRA.

The protein belongs to the protein kinase superfamily. CMGC Ser/Thr protein kinase family. CDC2/CDKX subfamily. As to quaternary structure, may form a complex composed of at least the catalytic subunit CRK2 and a cyclin. Requires Mg(2+) as cofactor.

The protein localises to the cytoplasm. The catalysed reaction is L-seryl-[protein] + ATP = O-phospho-L-seryl-[protein] + ADP + H(+). It catalyses the reaction L-threonyl-[protein] + ATP = O-phospho-L-threonyl-[protein] + ADP + H(+). It carries out the reaction [DNA-directed RNA polymerase] + ATP = phospho-[DNA-directed RNA polymerase] + ADP + H(+). Its activity is regulated as follows. Phosphorylation at Thr-17 or Tyr-18 inactivates the enzyme, while phosphorylation at Ser-230 activates it. Its function is as follows. Serine/threonine-protein kinase. Involved in the control of the cell cycle. Required for entry into S-phase and mitosis. Probable component of the kinase complex that phosphorylates the repetitive C-terminus of RNA polymerase II. This chain is Cyclin-dependent kinase 2 homolog, found in Crithidia fasciculata.